Here is a 406-residue protein sequence, read N- to C-terminus: Serine/threonine transporter SstT (406 aa).

9 helical membrane-spanning segments follow: residues 21-41 (LIIG…VAIL), 45-65 (FVGA…MGAI), 79-99 (ILIL…IASF), 138-158 (ALMN…GLAL), 179-199 (VVKW…FDSI), 213-233 (LLLL…PLIV), 285-305 (ISIP…IAVL), 313-333 (LGIT…AIAA), and 360-380 (IAMQ…SCET).

This sequence belongs to the dicarboxylate/amino acid:cation symporter (DAACS) (TC 2.A.23) family.

The protein localises to the cell membrane. It carries out the reaction L-serine(in) + Na(+)(in) = L-serine(out) + Na(+)(out). It catalyses the reaction L-threonine(in) + Na(+)(in) = L-threonine(out) + Na(+)(out). In terms of biological role, involved in the import of serine and threonine into the cell, with the concomitant import of sodium (symport system). In Desulfitobacterium hafniense (strain Y51), this protein is Serine/threonine transporter SstT.